Here is a 266-residue protein sequence, read N- to C-terminus: Glioma pathogenesis-related protein 1 (266 aa).

The N-terminal stretch at 1–21 (MRVTLATIAWMVSFVSNYSHT) is a signal peptide. In terms of domain architecture, SCP spans 38-175 (VRIHNKFRSE…SNGAHFICNY (138 aa)). A helical transmembrane segment spans residues 233-255 (YTSLFLIVNSVILILSVIITILV).

It belongs to the CRISP family. As to expression, according to PubMed:8973356, it is ubiquitously expressed with high levels in lung and kidney and low levels in heart and liver. Highly expressed in cell lines derived from nervous system tumors arising from glia, low or absent in non-glial-derived nervous system tumor cell lines. Also found in fetal kidney. According to PubMed:7607567 it is expressed only in brain tumor glioblastoma multiforme/astrocytoma and not in other nervous system tumors or normal fetal or adult tissues.

Its subcellular location is the membrane. This is Glioma pathogenesis-related protein 1 (GLIPR1) from Homo sapiens (Human).